A 437-amino-acid polypeptide reads, in one-letter code: Transcription factor TGAL5 (437 aa).

Residues 33–75 are disordered; the sequence is QEPYSNSQSVGSTTDSSSAQNTMSQAELVSPASMRSDSGQEQQ. Positions 37–50 are enriched in low complexity; it reads SNSQSVGSTTDSSS. Over residues 51–75 the composition is skewed to polar residues; the sequence is AQNTMSQAELVSPASMRSDSGQEQQ. One can recognise a bZIP domain in the interval 126–170; it reads DAKTERRLAQNREAARKSRLRKKAYVQQLETSRIRLQQIEQELQR. The tract at residues 128–148 is basic motif; the sequence is KTERRLAQNREAARKSRLRKK. The interval 154 to 168 is leucine-zipper; the sequence is LETSRIRLQQIEQEL. A DOG1 domain is found at 191–405; sequence AVMFDMDYTR…RALSSLWASR (215 aa).

The protein belongs to the bZIP family. In terms of assembly, interacts with NPR5/NH4, NH5.1 and NH5.2.

The protein localises to the nucleus. Transcriptional regulator involved in defense response. In Oryza sativa subsp. japonica (Rice), this protein is Transcription factor TGAL5.